The following is a 315-amino-acid chain: MANPWWTGQVNLSGLETTPPGSSQLKKPDLHISMNMAMDSGHNNHHHHQEVDNNNNDDDRDNLSGDDHEPREGAVEAPTRRPRGRPAGSKNKPKPPIFVTRDSPNALKSHVMEIASGTDVIETLATFARRRQRGICILSGNGTVANVTLRQPSTAAVAAAPGGAAVLALQGRFEILSLTGSFLPGPAPPGSTGLTIYLAGGQGQVVGGSVVGPLMAAGPVMLIAATFSNATYERLPLEEEEAAERGGGGGSGGVVPGQLGGGGSPLSSGAGGGDGNQGLPVYNMPGNLVSNGGSGGGGQMSGQEAYGWAQARSGF.

Polar residues predominate over residues 1–25 (MANPWWTGQVNLSGLETTPPGSSQL). 2 disordered regions span residues 1 to 104 (MANP…RDSP) and 239 to 285 (EEEA…YNMP). Positions 61 to 74 (DNLSGDDHEPREGA) are enriched in basic and acidic residues. The a.T hook DNA-binding region spans 80-92 (RRPRGRPAGSKNK). Positions 104-248 (PNALKSHVME…EEEAAERGGG (145 aa)) constitute a PPC domain. The segment covering 245-276 (RGGGGGSGGVVPGQLGGGGSPLSSGAGGGDGN) has biased composition (gly residues).

As to expression, slightly expressed in roots.

Its subcellular location is the nucleus. Its function is as follows. Transcription factor that specifically binds AT-rich DNA sequences related to the nuclear matrix attachment regions (MARs). Negatively regulates plant innate immunity (PTI) to pathogens through the down-regulation of the PAMP-triggered FRK1 expression. Positively regulates defense against fungal Verticillium infection. The polypeptide is AT-hook motif nuclear-localized protein 19 (Arabidopsis thaliana (Mouse-ear cress)).